A 291-amino-acid polypeptide reads, in one-letter code: Ribosomal RNA small subunit methyltransferase A (291 aa).

The S-adenosyl-L-methionine site is built by His-21, Leu-23, Gly-48, Glu-70, Asp-95, and Asn-115.

It belongs to the class I-like SAM-binding methyltransferase superfamily. rRNA adenine N(6)-methyltransferase family. RsmA subfamily.

Its subcellular location is the cytoplasm. The catalysed reaction is adenosine(1518)/adenosine(1519) in 16S rRNA + 4 S-adenosyl-L-methionine = N(6)-dimethyladenosine(1518)/N(6)-dimethyladenosine(1519) in 16S rRNA + 4 S-adenosyl-L-homocysteine + 4 H(+). Its function is as follows. Specifically dimethylates two adjacent adenosines (A1518 and A1519) in the loop of a conserved hairpin near the 3'-end of 16S rRNA in the 30S particle. May play a critical role in biogenesis of 30S subunits. The chain is Ribosomal RNA small subunit methyltransferase A from Prochlorococcus marinus (strain NATL2A).